Here is a 434-residue protein sequence, read N- to C-terminus: Methylenetetrahydrofolate--tRNA-(uracil-5-)-methyltransferase TrmFO (434 aa).

9–14 (GAGLAG) is a binding site for FAD.

Belongs to the MnmG family. TrmFO subfamily. The cofactor is FAD.

It localises to the cytoplasm. It catalyses the reaction uridine(54) in tRNA + (6R)-5,10-methylene-5,6,7,8-tetrahydrofolate + NADH + H(+) = 5-methyluridine(54) in tRNA + (6S)-5,6,7,8-tetrahydrofolate + NAD(+). The catalysed reaction is uridine(54) in tRNA + (6R)-5,10-methylene-5,6,7,8-tetrahydrofolate + NADPH + H(+) = 5-methyluridine(54) in tRNA + (6S)-5,6,7,8-tetrahydrofolate + NADP(+). Catalyzes the folate-dependent formation of 5-methyl-uridine at position 54 (M-5-U54) in all tRNAs. In Fusobacterium nucleatum subsp. nucleatum (strain ATCC 25586 / DSM 15643 / BCRC 10681 / CIP 101130 / JCM 8532 / KCTC 2640 / LMG 13131 / VPI 4355), this protein is Methylenetetrahydrofolate--tRNA-(uracil-5-)-methyltransferase TrmFO.